The sequence spans 862 residues: Short transient receptor potential channel 7 (862 aa).

Residues 1 to 21 are disordered; that stretch reads MLRNSTFKNMQRRHTTLREKG. Topologically, residues 1 to 351 are cytoplasmic; the sequence is MLRNSTFKNM…GLRQQSIAVK (351 aa). Basic residues predominate over residues 10-21; sequence MQRRHTTLREKG. T15 carries the phosphothreonine; by PKG/PRKG1 modification. ANK repeat units follow at residues 42–71, 77–106, 108–134, and 163–192; these read PEEERFLDSAEYGNIPVVRKMLEESKTLNF, MGQNALQLAVGNEHLEVTELLLKKENLARV, DALLLAISKGYVRIVEAILNHPAFAQG, and HDITPIILAAHCQEYEIVHILLLKGARIER. A helical transmembrane segment spans residues 352-372; the sequence is FLAVFGVSIGLPFLAIAYWIA. At 373 to 383 the chain is on the extracellular side; it reads PCSKLGRTLRS. Residues 384–404 traverse the membrane as a helical segment; the sequence is PFMKFVAHAVSFTIFLGLLVV. Over 405 to 465 the chain is Cytoplasmic; it reads NASDRFEGVK…KEIWEEGPRE (61 aa). The chain crosses the membrane as a helical span at residues 466–486; the sequence is YVLHLWNLLDFGMLSIFVASF. At 487–537 the chain is on the extracellular side; sequence TARFMAFLKATEAQLYVDQHVQDDTLHNVSLPPEVAYFTYARDKWWPSDPQ. Residue N514 is glycosylated (N-linked (GlcNAc...) asparagine). A helical membrane pass occupies residues 538 to 558; the sequence is IISEGLYAIAVVLSFSRIAYI. The Cytoplasmic segment spans residues 559 to 581; it reads LPANESFGPLQISLGRTVKDIFK. Residues 582–602 form a helical membrane-spanning segment; the sequence is FMVIFIMVFVAFMIGMFNLYS. Residues 603–651 are Extracellular-facing; the sequence is YYRGAKYNPAFTTVEESFKTLFWSIFGLSEVISVVLKYDHKFIENIGYV. The chain crosses the membrane as a helical span at residues 652–672; it reads LYGVYNVTMVVVLLNMLIAMI. The Cytoplasmic portion of the chain corresponds to 673 to 862; it reads NNSYQEIEED…HLRVNKGKDI (190 aa).

Belongs to the transient receptor (TC 1.A.4) family. STrpC subfamily. TRPC7 sub-subfamily. As to quaternary structure, interacts with MX1 and RNF24. Interacts (via ANK-repeat domains) with PRKG1. Post-translationally, phosphorylation by PRKG1 at Thr-15 negatively regulates TRPC7 activity.

Its subcellular location is the cell membrane. The protein resides in the nucleus envelope. The enzyme catalyses Ca(2+)(in) = Ca(2+)(out). Its function is as follows. Forms a receptor-activated non-selective calcium permeant cation channel. Probably is operated by a phosphatidylinositol second messenger system activated by receptor tyrosine kinases or G-protein coupled receptors. Activated by diacylglycerol (DAG). May also be activated by intracellular calcium store depletion. The protein is Short transient receptor potential channel 7 (TRPC7) of Homo sapiens (Human).